Reading from the N-terminus, the 385-residue chain is Protein-glutamate methylesterase/protein-glutamine glutaminase (385 aa).

Positions 20–138 constitute a Response regulatory domain; sequence RVMIVDDSVV…EASAADIFKH (119 aa). 4-aspartylphosphate is present on Asp71. The 195-residue stretch at 189-383 folds into the CheB-type methylesterase domain; that stretch reads GVTAPRVLLI…PKLVRLFSGD (195 aa). Catalysis depends on residues Ser201, His229, and Asp325.

It belongs to the CheB family. In terms of processing, phosphorylated by CheA. Phosphorylation of the N-terminal regulatory domain activates the methylesterase activity.

The protein localises to the cytoplasm. The catalysed reaction is [protein]-L-glutamate 5-O-methyl ester + H2O = L-glutamyl-[protein] + methanol + H(+). The enzyme catalyses L-glutaminyl-[protein] + H2O = L-glutamyl-[protein] + NH4(+). Its function is as follows. Involved in chemotaxis. Part of a chemotaxis signal transduction system that modulates chemotaxis in response to various stimuli. Catalyzes the demethylation of specific methylglutamate residues introduced into the chemoreceptors (methyl-accepting chemotaxis proteins or MCP) by CheR. Also mediates the irreversible deamidation of specific glutamine residues to glutamic acid. The polypeptide is Protein-glutamate methylesterase/protein-glutamine glutaminase (Rhodopseudomonas palustris (strain BisB5)).